The sequence spans 503 residues: Zinc-regulated transporter 3 (503 aa).

3 helical membrane-spanning segments follow: residues 8 to 28 (LLFSLISSVLCILGALCVPLL), 42 to 62 (LVNYGLSLSAGSMITTSLYML), and 75 to 95 (FPGLLLGICLSFFLNYLVHAF). The segment at 112-171 (GSHIHSKSHSHSHSHSHADSHSNFSNDHDLENAPSEHGYATSSSSVSENDPLITKDSDRP) is disordered. The span at 115–126 (IHSKSHSHSHSH) shows a compositional bias: basic residues. Over residues 127–142 (SHADSHSNFSNDHDLE) the composition is skewed to basic and acidic residues. 2 positions are modified to phosphoserine: S178 and S188. Disordered stretches follow at residues 221–244 (QSERNVPHGCEGSEDNGQSDDKDH) and 274–295 (HHSSESPENYGSNQLSHSFSSP). Positions 280-295 (PENYGSNQLSHSFSSP) are enriched in polar residues. Transmembrane regions (helical) follow at residues 336 to 356 (IGMQTCLVLALHKFPEGFIIF), 371 to 391 (IFLSLTIHNFVEGFAMTLPFY), 398 to 418 (WVAILITAVLGGGSQPLGALI), 438 to 458 (LLSVTAGFLLVIGLQMFQTGI), and 482 to 502 (GTTCLKWCCTGVLLILASALF).

The protein belongs to the ZIP transporter (TC 2.A.5) family.

It is found in the vacuole membrane. Transports zinc from storage in the vacuole to the cytoplasm. The sequence is that of Zinc-regulated transporter 3 (ZRT3) from Saccharomyces cerevisiae (strain ATCC 204508 / S288c) (Baker's yeast).